Here is a 1144-residue protein sequence, read N- to C-terminus: Alpha-mannosidase 2 (1144 aa).

Residues 1-5 lie on the Cytoplasmic side of the membrane; sequence MKLSR. The chain crosses the membrane as a helical; Signal-anchor for type II membrane protein span at residues 6-26; it reads QFTVFGSAIFCVVIFSLYLML. Topologically, residues 27–1144 are lumenal; sequence DRGHLDYPRN…EISTFRIQLR (1118 aa). Asn78 is a glycosylation site (N-linked (GlcNAc...) asparagine). Phosphoserine occurs at positions 80 and 82. An N-linked (GlcNAc...) asparagine glycan is attached at Asn93. Zn(2+)-binding residues include His175, Asp177, Asp289, and His569. The active-site Nucleophile is the Asp289. An N-linked (GlcNAc...) asparagine glycan is attached at Asn1125.

Belongs to the glycosyl hydrolase 38 family. In terms of assembly, homodimer; disulfide-linked. Zn(2+) serves as cofactor. Glycosylated.

It localises to the golgi apparatus membrane. The enzyme catalyses N(4)-{beta-D-GlcNAc-(1-&gt;2)-alpha-D-Man-(1-&gt;3)-[alpha-D-Man-(1-&gt;3)-[alpha-D-Man-(1-&gt;6)]-alpha-D-Man-(1-&gt;6)]-beta-D-Man-(1-&gt;4)-beta-D-GlcNAc-(1-&gt;4)-beta-D-GlcNAc}-L-asparaginyl-[protein] + 2 H2O = 2 alpha-D-mannopyranose + an N(4)-{beta-D-GlcNAc-(1-&gt;2)-alpha-D-Man-(1-&gt;3)-[alpha-D-Man-(1-&gt;6)]-beta-D-Man-(1-&gt;4)-beta-D-GlcNAc-(1-&gt;4)-beta-D-GlcNAc}-L-asparaginyl-[protein]. The protein operates within protein modification; protein glycosylation. Catalyzes the first committed step in the biosynthesis of complex N-glycans. It controls conversion of high mannose to complex N-glycans; the final hydrolytic step in the N-glycan maturation pathway. The sequence is that of Alpha-mannosidase 2 (MAN2A1) from Homo sapiens (Human).